Consider the following 127-residue polypeptide: Photosystem II reaction center Psb28 protein (127 aa).

The segment at G107–A127 is disordered. Positions G109–Q118 are enriched in polar residues.

It belongs to the Psb28 family. In terms of assembly, part of the photosystem II complex.

Its subcellular location is the cellular thylakoid membrane. The sequence is that of Photosystem II reaction center Psb28 protein from Parasynechococcus marenigrum (strain WH8102).